Consider the following 901-residue polypeptide: Cyanophycin synthetase (901 aa).

The ATP-grasp domain occupies 224–478 (KRILAASGVP…VAGAVMDMLF (255 aa)). 493–499 (GTNGKTT) is a binding site for ATP.

In the C-terminal section; belongs to the MurCDEF family. Homodimer.

The catalysed reaction is [L-4-(L-arginin-2-N-yl)aspartate](n) + L-aspartate + ATP = [L-4-(L-arginin-2-N-yl)aspartate](n)-L-aspartate + ADP + phosphate + H(+). The enzyme catalyses [L-4-(L-arginin-2-N-yl)aspartate](n)-L-aspartate + L-arginine + ATP = [L-4-(L-arginin-2-N-yl)aspartate](n+1) + ADP + phosphate + H(+). Functionally, catalyzes the ATP-dependent polymerization of arginine and aspartate to multi-L-arginyl-poly-L-aspartic acid (cyanophycin; a water-insoluble reserve polymer). The chain is Cyanophycin synthetase (cphA) from Nostoc sp. (strain PCC 7120 / SAG 25.82 / UTEX 2576).